The chain runs to 489 residues: MTEHLDVVIVGAGISGVSAAWHLQDRCPTKSYAILEKRESMGGTWDLFRYPGIRSDSDMYTLGFRFRPWTGRQAIADGKPILEYVKSTAAMYGIDRHIRFHHKVISADWSTAENRWTVHIQSHGTLSALTCEFLFLCSGYYNYDEGYSPRFAGSEDFVGPIIHPQHWPEDLDYDAKNIVVIGSGATAVTLVPALADSGAKHVTMLQRSPTYIVSQPDRDGIAEKLNRWLPETMAYTAVRWKNVLRQAAVYSACQKWPRRMRKMFLSLIQRQLPEGYDVRKHFGPHYNPWDQRLCLVPNGDLFRAIRHGKVEVVTDTIERFTATGIRLNSGRELPADIIITATGLNLQLFGGATATIDGQQVDITTTMAYKGMMLSGIPNMAYTVGYTNASWTLKADLVSEFVCRLLNYMDDNGFDTVVVERPGSDVEERPFMEFTPGYVLRSLDELPKQGSRTPWRLNQNYLRDIRLIRRGKIDDEGLRFAKRPAPVGV.

FAD-binding positions include Ser-15, Glu-36, 44–47 (TWDL), Asp-56, and Val-104. 54-56 (RSD) is a binding site for NADP(+). Residues 183 to 189 (SGATAVT) and 207 to 208 (RS) contribute to the NADP(+) site.

This sequence belongs to the FAD-binding monooxygenase family. Requires FAD as cofactor.

The protein localises to the cell membrane. The enzyme catalyses ethionamide + NADPH + O2 + H(+) = ethionamide S-oxide + NADP(+) + H2O. Monooxygenase able to convert a wide range of ketones to the corresponding esters or lactones via a Baeyer-Villiger oxidation reaction. Can act on long-chain aliphatic ketones (2-hexanone to 2-dodecanone) and on aromatic ketones (phenylacetone and benzylacetone). Is also able to catalyze enantioselective sulfoxidation of methyl-p-tolylsulfide. In vivo, likely functions as a BVMO, but the exact nature of the physiological substrate(s) remains to be established. In terms of biological role, is responsible for the activation of several thiocarbamide-containing pro-drugs, such as ethionamide (ETH), isoxyl (ISO) and thiacetazone (TAC), into reactive species. This is FAD-containing monooxygenase EthA (ethA) from Mycobacterium bovis (strain ATCC BAA-935 / AF2122/97).